Consider the following 559-residue polypeptide: Probable alpha-(1-&gt;6)-mannopyranosyltransferase MSMEG_3120/MSMEI_3041 (559 aa).

12 helical membrane-spanning segments follow: residues 41-61 (FGAT…ARPV), 81-101 (VSLT…LMLG), 202-222 (IVEA…LIVW), 247-267 (LLFM…GLML), 300-316 (WQPM…IAMS), 321-340 (LPSL…RWGG), 355-375 (ISLA…GWLF), 386-406 (WMSP…LLGL), 419-439 (AIGV…VLRG), 455-475 (VLLF…PLAA), 480-500 (PGFR…GPTA), and 507-527 (LFQI…LIAL). The segment covering 535–548 (RPAPEPPARPPEQP) has biased composition (pro residues). Residues 535 to 559 (RPAPEPPARPPEQPAPADDAYAESP) are disordered.

The protein belongs to the MptA/B family.

The protein localises to the membrane. In terms of biological role, catalyzes the addition of alpha-(1-&gt;6)-mannose residue. In Mycolicibacterium smegmatis (strain ATCC 700084 / mc(2)155) (Mycobacterium smegmatis), this protein is Probable alpha-(1-&gt;6)-mannopyranosyltransferase MSMEG_3120/MSMEI_3041.